We begin with the raw amino-acid sequence, 222 residues long: ATP-dependent Clp protease proteolytic subunit (222 aa).

Residue S125 is the Nucleophile of the active site. The active site involves H150.

It belongs to the peptidase S14 family. As to quaternary structure, fourteen ClpP subunits assemble into 2 heptameric rings which stack back to back to give a disk-like structure with a central cavity, resembling the structure of eukaryotic proteasomes.

The protein resides in the cytoplasm. The enzyme catalyses Hydrolysis of proteins to small peptides in the presence of ATP and magnesium. alpha-casein is the usual test substrate. In the absence of ATP, only oligopeptides shorter than five residues are hydrolyzed (such as succinyl-Leu-Tyr-|-NHMec, and Leu-Tyr-Leu-|-Tyr-Trp, in which cleavage of the -Tyr-|-Leu- and -Tyr-|-Trp bonds also occurs).. Functionally, cleaves peptides in various proteins in a process that requires ATP hydrolysis. Has a chymotrypsin-like activity. Plays a major role in the degradation of misfolded proteins. The polypeptide is ATP-dependent Clp protease proteolytic subunit (Porphyromonas gingivalis (strain ATCC BAA-308 / W83)).